The chain runs to 538 residues: Syncytin-1 (538 aa).

The first 20 residues, 1–20 (MALPYHIFLFTVLLPSFTLT), serve as a signal peptide directing secretion. Residues 21 to 443 (APPPCRCMTS…NTGPWGLLSQ (423 aa)) lie on the Extracellular side of the membrane. Asn169 carries an N-linked (GlcNAc...) asparagine glycan. A CXXC motif is present at residues 186 to 189 (CWIC). 3 disulfide bridges follow: Cys186-Cys189, Cys186-Cys405, and Cys397-Cys404. Asn208, Asn214, Asn234, Asn242, and Asn281 each carry an N-linked (GlcNAc...) asparagine glycan. The interval 320 to 340 (ILPFVIGAGVLGALGTGIGGI) is fusion peptide. Positions 380 to 396 (LQNRRALDLLTAERGGT) are immunosuppression. The short motif at 397–405 (CLFLGEECC) is the CX6CC element. Asn409 carries N-linked (GlcNAc...) asparagine glycosylation. A helical transmembrane segment spans residues 444 to 464 (WMPWILPFLGPLAAIILLLLF). The tract at residues 465–484 (GPCIFNLLVNFVSSRIEAVK) is essential for the fusiogenic function. The Cytoplasmic segment spans residues 465–538 (GPCIFNLLVN…LLRPNSAGSS (74 aa)). Residues 496–538 (KIYRRPLDRPASPRSDVNDIKGTPPEEILTAQPLLRPNSAGSS) are disordered.

Belongs to the gamma type-C retroviral envelope protein family. HERV class-I W env subfamily. As to quaternary structure, the mature envelope protein (Env) consists of a trimer of SU-TM heterodimers attached probably by a labile interchain disulfide bond. Interacts with the C-type lectin CD209/DC-SIGN. In terms of processing, specific enzymatic cleavages in vivo yield mature proteins. Envelope glycoproteins are synthesized as an inactive precursor that is heavily N-glycosylated and processed likely by furin in the Golgi to yield the mature SU and TM proteins. The cleavage site between SU and TM requires the minimal sequence [KR]-X-[KR]-R. Post-translationally, the CXXC motif is highly conserved across a broad range of retroviral envelope proteins. It is thought to participate in the formation of a labile disulfide bond possibly with the CX6CC motif present in the transmembrane protein.

The protein resides in the cell membrane. It is found in the virion. This endogenous retroviral envelope protein has retained its original fusogenic properties and participates in trophoblast fusion and the formation of a syncytium during placenta morphogenesis. May recognize and induce fusion through binding of SLC1A4 and SLC1A5. In terms of biological role, endogenous envelope proteins may have kept, lost or modified their original function during evolution. Retroviral envelope proteins mediate receptor recognition and membrane fusion during early infection. The surface protein (SU) mediates receptor recognition, while the transmembrane protein (TM) acts as a class I viral fusion protein. The protein may have at least 3 conformational states: pre-fusion native state, pre-hairpin intermediate state, and post-fusion hairpin state. During viral and target cell membrane fusion, the coiled coil regions (heptad repeats) assume a trimer-of-hairpins structure, positioning the fusion peptide in close proximity to the C-terminal region of the ectodomain. The formation of this structure appears to drive apposition and subsequent fusion of membranes. The protein is Syncytin-1 (ERVW-1) of Pan troglodytes (Chimpanzee).